The chain runs to 263 residues: Acyl-[acyl-carrier-protein]--UDP-N-acetylglucosamine O-acyltransferase (263 aa).

Belongs to the transferase hexapeptide repeat family. LpxA subfamily. Homotrimer.

It is found in the cytoplasm. It catalyses the reaction a (3R)-hydroxyacyl-[ACP] + UDP-N-acetyl-alpha-D-glucosamine = a UDP-3-O-[(3R)-3-hydroxyacyl]-N-acetyl-alpha-D-glucosamine + holo-[ACP]. The protein operates within glycolipid biosynthesis; lipid IV(A) biosynthesis; lipid IV(A) from (3R)-3-hydroxytetradecanoyl-[acyl-carrier-protein] and UDP-N-acetyl-alpha-D-glucosamine: step 1/6. Functionally, involved in the biosynthesis of lipid A, a phosphorylated glycolipid that anchors the lipopolysaccharide to the outer membrane of the cell. This chain is Acyl-[acyl-carrier-protein]--UDP-N-acetylglucosamine O-acyltransferase, found in Campylobacter lari (strain RM2100 / D67 / ATCC BAA-1060).